A 699-amino-acid chain; its full sequence is Polyribonucleotide nucleotidyltransferase (699 aa).

D493 and D499 together coordinate Mg(2+). A KH domain is found at 560-620 (PLIANIEIDP…NKVNQAIEYI (61 aa)). The 68-residue stretch at 630–697 (GDMFEGKITR…DSGRIQLGKA (68 aa)) folds into the S1 motif domain.

The protein belongs to the polyribonucleotide nucleotidyltransferase family. Requires Mg(2+) as cofactor.

It is found in the cytoplasm. It carries out the reaction RNA(n+1) + phosphate = RNA(n) + a ribonucleoside 5'-diphosphate. Its function is as follows. Involved in mRNA degradation. Catalyzes the phosphorolysis of single-stranded polyribonucleotides processively in the 3'- to 5'-direction. This is Polyribonucleotide nucleotidyltransferase from Thermosipho melanesiensis (strain DSM 12029 / CIP 104789 / BI429).